Here is a 169-residue protein sequence, read N- to C-terminus: Ribosome maturation factor RimM (169 aa).

A PRC barrel domain is found at 94-166 (EEGFYDHELE…TATITPPDGL (73 aa)).

The protein belongs to the RimM family. As to quaternary structure, binds ribosomal protein uS19.

The protein localises to the cytoplasm. Functionally, an accessory protein needed during the final step in the assembly of 30S ribosomal subunit, possibly for assembly of the head region. Essential for efficient processing of 16S rRNA. May be needed both before and after RbfA during the maturation of 16S rRNA. It has affinity for free ribosomal 30S subunits but not for 70S ribosomes. The sequence is that of Ribosome maturation factor RimM from Corynebacterium efficiens (strain DSM 44549 / YS-314 / AJ 12310 / JCM 11189 / NBRC 100395).